We begin with the raw amino-acid sequence, 390 residues long: 8-amino-7-oxononanoate synthase (390 aa).

A substrate-binding site is contributed by Arg-19. A pyridoxal 5'-phosphate-binding site is contributed by 106-107; that stretch reads GY. His-131 contacts substrate. 3 residues coordinate pyridoxal 5'-phosphate: Ser-176, His-204, and Thr-233. Lys-236 is modified (N6-(pyridoxal phosphate)lysine). Residue Thr-350 coordinates substrate.

Belongs to the class-II pyridoxal-phosphate-dependent aminotransferase family. BioF subfamily. As to quaternary structure, homodimer. Requires pyridoxal 5'-phosphate as cofactor.

It carries out the reaction 6-carboxyhexanoyl-[ACP] + L-alanine + H(+) = (8S)-8-amino-7-oxononanoate + holo-[ACP] + CO2. Its pathway is cofactor biosynthesis; biotin biosynthesis. Catalyzes the decarboxylative condensation of pimeloyl-[acyl-carrier protein] and L-alanine to produce 8-amino-7-oxononanoate (AON), [acyl-carrier protein], and carbon dioxide. The protein is 8-amino-7-oxononanoate synthase of Pseudomonas putida (strain W619).